Consider the following 84-residue polypeptide: MAQAQSPLQWLATTVIRGYQLFISPLMGPRCRFNPTCSHYAIEAIKLHGTAKGSWFALKRILRCHPLHPGGSDPVPPKNDRCNK.

It belongs to the UPF0161 family.

It is found in the cell inner membrane. Its function is as follows. Could be involved in insertion of integral membrane proteins into the membrane. The chain is Putative membrane protein insertion efficiency factor from Shewanella denitrificans (strain OS217 / ATCC BAA-1090 / DSM 15013).